Consider the following 270-residue polypeptide: Undecaprenyl-diphosphatase 3 (270 aa).

7 helical membrane-spanning segments follow: residues 5–25 (YYILKYLILGLFQGLTEPIPI), 42–62 (IEGFSFELLVNSASLLAVLLI), 89–109 (FFFIIYLVIATIPAGVIGVLF), 117–137 (LKGVKMVGISLLITAVGLWII), 192–212 (FSFLLYIPVSLGGLLLSITDI), 220–240 (TLFVPYIVAFIATFIMTYISL), and 250–270 (GNLKYFSFYCIIVGVLTLIFL).

Belongs to the UppP family.

It is found in the cell membrane. The catalysed reaction is di-trans,octa-cis-undecaprenyl diphosphate + H2O = di-trans,octa-cis-undecaprenyl phosphate + phosphate + H(+). Catalyzes the dephosphorylation of undecaprenyl diphosphate (UPP). Confers resistance to bacitracin. This is Undecaprenyl-diphosphatase 3 from Bacillus anthracis.